Reading from the N-terminus, the 364-residue chain is MQKKIKVLCVDDSALIRSLMTEIINSQPDMEVCATAPDPLVARELIKQHNPDVLTLDVEMPRMDGLDFLEKLMRLRPMPVVMVSSLTERGSEITLRALELGAVDFVTKPRVGIRDGMLDYSEKLADKVRAASRARVRQNPQPHAAAAAAAHGHAGAAAPLINNPLVSTEKLIIVGASTGGTEAIREVLTPLPPDAPAVLIAQHMPPGFTRSFAQRLNGLCRISVKEAEHGERVLPGHAYIAPGHAHLLLARSGANYIAHLSDEPPVNRHRPSVDVLFRSAAQHAGKNALGVILTGMGRDGAAGLLEMKKAGAYTFAQDEASCVVFGMPREAIAMGGVDDVAPLSDMSRRIMARLASMGDRVQRV.

A Response regulatory domain is found at Lys-6 to Lys-123. Asp-57 bears the 4-aspartylphosphate mark. Residues Leu-165–Met-357 form the CheB-type methylesterase domain. Catalysis depends on residues Ser-177, His-203, and Asp-299.

Belongs to the CheB family. In terms of processing, phosphorylated by CheA. Phosphorylation of the N-terminal regulatory domain activates the methylesterase activity.

Its subcellular location is the cytoplasm. The enzyme catalyses [protein]-L-glutamate 5-O-methyl ester + H2O = L-glutamyl-[protein] + methanol + H(+). The catalysed reaction is L-glutaminyl-[protein] + H2O = L-glutamyl-[protein] + NH4(+). Its function is as follows. Involved in chemotaxis. Part of a chemotaxis signal transduction system that modulates chemotaxis in response to various stimuli. Catalyzes the demethylation of specific methylglutamate residues introduced into the chemoreceptors (methyl-accepting chemotaxis proteins or MCP) by CheR. Also mediates the irreversible deamidation of specific glutamine residues to glutamic acid. This chain is Protein-glutamate methylesterase/protein-glutamine glutaminase 1, found in Burkholderia mallei (strain ATCC 23344).